The chain runs to 305 residues: Energy-coupling factor transporter ATP-binding protein EcfA2 (305 aa).

Residues 13-262 (LQNVDITFTN…KNLLQELLIE (250 aa)) form the ABC transporter domain. ATP is bound at residue 55 to 62 (GSTGSGKS).

The protein belongs to the ABC transporter superfamily. Energy-coupling factor EcfA family. As to quaternary structure, forms a stable energy-coupling factor (ECF) transporter complex composed of 2 membrane-embedded substrate-binding proteins (S component), 2 ATP-binding proteins (A component) and 2 transmembrane proteins (T component).

The protein localises to the cell membrane. Its function is as follows. ATP-binding (A) component of a common energy-coupling factor (ECF) ABC-transporter complex. Unlike classic ABC transporters this ECF transporter provides the energy necessary to transport a number of different substrates. In Spiroplasma kunkelii, this protein is Energy-coupling factor transporter ATP-binding protein EcfA2.